A 309-amino-acid polypeptide reads, in one-letter code: PI-PLC X domain-containing protein 1 (309 aa).

A PI-PLC X-box domain is found at 17–193 (HMWDIPLWNL…QVILSYDDES (177 aa)).

The chain is PI-PLC X domain-containing protein 1 (plcxd1) from Danio rerio (Zebrafish).